An 868-amino-acid polypeptide reads, in one-letter code: DNA mismatch repair protein MutS (868 aa).

Residue 620 to 627 (GPNMGGKS) coordinates ATP.

This sequence belongs to the DNA mismatch repair MutS family.

Its function is as follows. This protein is involved in the repair of mismatches in DNA. It is possible that it carries out the mismatch recognition step. This protein has a weak ATPase activity. This chain is DNA mismatch repair protein MutS, found in Desulforamulus reducens (strain ATCC BAA-1160 / DSM 100696 / MI-1) (Desulfotomaculum reducens).